Consider the following 364-residue polypeptide: Fructose-bisphosphate aldolase B (364 aa).

N-acetylalanine is present on Ala2. N6-succinyllysine is present on Lys13. The residue at position 36 (Ser36) is a Phosphoserine. Thr39 bears the Phosphothreonine mark. Arg43 provides a ligand contact to beta-D-fructose 1,6-bisphosphate. A Phosphoserine modification is found at Ser89. The residue at position 119 (Thr119) is a Phosphothreonine. An N6-succinyllysine modification is found at Lys121. Phosphoserine is present on Ser132. The active-site Proton acceptor is the Glu188. Lys230 (schiff-base intermediate with dihydroxyacetone-P) is an active-site residue. Phosphoserine occurs at positions 272, 276, 299, and 301. 272-274 (SGG) contributes to the beta-D-fructose 1,6-bisphosphate binding site. Arg304 provides a ligand contact to beta-D-fructose 1,6-bisphosphate. Ser309 is subject to Phosphoserine. Lys317 bears the N6-succinyllysine mark.

It belongs to the class I fructose-bisphosphate aldolase family. As to quaternary structure, homotetramer. Interacts with BBS1, BBS2, BBS4 and BBS7. Forms a ternary complex with G6PD and TP53; this interaction is direct.

Its subcellular location is the cytoplasm. It localises to the cytosol. The protein resides in the cytoskeleton. It is found in the microtubule organizing center. The protein localises to the centrosome. Its subcellular location is the centriolar satellite. The catalysed reaction is beta-D-fructose 1,6-bisphosphate = D-glyceraldehyde 3-phosphate + dihydroxyacetone phosphate. It catalyses the reaction beta-D-fructose 1-phosphate = D-glyceraldehyde + dihydroxyacetone phosphate. The protein operates within carbohydrate degradation; glycolysis; D-glyceraldehyde 3-phosphate and glycerone phosphate from D-glucose: step 4/4. It functions in the pathway carbohydrate biosynthesis; gluconeogenesis. Its pathway is carbohydrate metabolism; fructose metabolism. In terms of biological role, catalyzes the aldol cleavage of fructose 1,6-biphosphate to form two triosephosphates dihydroxyacetone phosphate and D-glyceraldehyde 3-phosphate in glycolysis as well as the reverse stereospecific aldol addition reaction in gluconeogenesis. In fructolysis, metabolizes fructose 1-phosphate derived from the phosphorylation of dietary fructose by fructokinase into dihydroxyacetone phosphate and D-glyceraldehyde. Acts as an adapter independently of its enzymatic activity, exerts a tumor suppressor role by stabilizing the ternary complex with G6PD and TP53 to inhibit G6PD activity and keep oxidative pentose phosphate metabolism in check. This Pongo abelii (Sumatran orangutan) protein is Fructose-bisphosphate aldolase B (ALDOB).